Here is a 96-residue protein sequence, read N- to C-terminus: Protein Vpr (96 aa).

Residues Met1 to Leu42 form a homooligomerization region. Residues Ser79, Ser94, and Ser96 each carry the phosphoserine; by host modification.

This sequence belongs to the HIV-1 VPR protein family. In terms of assembly, homooligomer, may form homodimer. Interacts with p6-gag region of the Pr55 Gag precursor protein through a (Leu-X-X)4 motif near the C-terminus of the P6gag protein. Interacts with host UNG. May interact with host RAD23A/HHR23A. Interacts with host VPRBP/DCAF1, leading to hijack the CUL4A-RBX1-DDB1-DCAF1/VPRBP complex, mediating ubiquitination of host proteins such as TERT and ZGPAT and arrest of the cell cycle in G2 phase. Phosphorylated on several residues by host. These phosphorylations regulate VPR activity for the nuclear import of the HIV-1 pre-integration complex.

It localises to the virion. It is found in the host nucleus. The protein localises to the host extracellular space. Functionally, during virus replication, may deplete host UNG protein, and incude G2-M cell cycle arrest. Acts by targeting specific host proteins for degradation by the 26S proteasome, through association with the cellular CUL4A-DDB1 E3 ligase complex by direct interaction with host VPRPB/DCAF-1. Cell cycle arrest reportedly occurs within hours of infection and is not blocked by antiviral agents, suggesting that it is initiated by the VPR carried into the virion. Additionally, VPR induces apoptosis in a cell cycle dependent manner suggesting that these two effects are mechanistically linked. Detected in the serum and cerebrospinal fluid of AIDS patient, VPR may also induce cell death to bystander cells. During virus entry, plays a role in the transport of the viral pre-integration (PIC) complex to the host nucleus. This function is crucial for viral infection of non-dividing macrophages. May act directly at the nuclear pore complex, by binding nucleoporins phenylalanine-glycine (FG)-repeat regions. The protein is Protein Vpr of Human immunodeficiency virus type 1 group M subtype F1 (isolate VI850) (HIV-1).